The chain runs to 285 residues: Bis(5'-nucleosyl)-tetraphosphatase, symmetrical (285 aa).

The protein belongs to the Ap4A hydrolase family.

It catalyses the reaction P(1),P(4)-bis(5'-adenosyl) tetraphosphate + H2O = 2 ADP + 2 H(+). Its function is as follows. Hydrolyzes diadenosine 5',5'''-P1,P4-tetraphosphate to yield ADP. The protein is Bis(5'-nucleosyl)-tetraphosphatase, symmetrical of Pseudomonas entomophila (strain L48).